Here is a 116-residue protein sequence, read N- to C-terminus: Small ribosomal subunit protein bS16 (116 aa).

The disordered stretch occupies residues 88–116 (RNNPKAAVPGKRMAELAKKKAERAAASAE). Residues 99-110 (RMAELAKKKAER) show a composition bias toward basic and acidic residues.

It belongs to the bacterial ribosomal protein bS16 family.

The protein is Small ribosomal subunit protein bS16 of Cereibacter sphaeroides (strain ATCC 17025 / ATH 2.4.3) (Rhodobacter sphaeroides).